Reading from the N-terminus, the 349-residue chain is Anthranilate phosphoribosyltransferase (349 aa).

5-phospho-alpha-D-ribose 1-diphosphate-binding positions include G82, 85-86 (GD), 92-95 (NVSS), 110-118 (KHGNRAVSG), and S122. G82 lines the anthranilate pocket. Position 94 (S94) interacts with Mg(2+). N113 contacts anthranilate. R168 serves as a coordination point for anthranilate. Residues D227 and E228 each contribute to the Mg(2+) site.

It belongs to the anthranilate phosphoribosyltransferase family. As to quaternary structure, homodimer. Requires Mg(2+) as cofactor.

The catalysed reaction is N-(5-phospho-beta-D-ribosyl)anthranilate + diphosphate = 5-phospho-alpha-D-ribose 1-diphosphate + anthranilate. It participates in amino-acid biosynthesis; L-tryptophan biosynthesis; L-tryptophan from chorismate: step 2/5. In terms of biological role, catalyzes the transfer of the phosphoribosyl group of 5-phosphorylribose-1-pyrophosphate (PRPP) to anthranilate to yield N-(5'-phosphoribosyl)-anthranilate (PRA). The sequence is that of Anthranilate phosphoribosyltransferase from Pseudomonas paraeruginosa (strain DSM 24068 / PA7) (Pseudomonas aeruginosa (strain PA7)).